The chain runs to 305 residues: MPSKLFVGNLPDNVDSNKLKQVFQPFCKVTECDIVKNYAFVHIEEDDVDPIITRLTGYTIDGKVVNIKKSTSKLRPTPGMPNRCFRCQSDEHRTPQCPQDPTNNQKTENGVQTLKFDLTSGAGVKRSAGDPIIDSAKRIAYGAQSVVEPEIPQPMDPDLQALYQEYQLSRQRYVYYRDRLLKEMEAKQHGSTAGFALSSSSTVPVPVASAPPGATQLSAAPVSYQPNAPPVIASINAPYAVASNLRAPYALQSAPYASAASAPYGSVTPAGAPSNVMTTQQYLQQIQHQQATGSPAPVPAPPRLY.

In terms of domain architecture, RRM spans 3–72 (SKLFVGNLPD…KVVNIKKSTS (70 aa)). The CCHC-type zinc-finger motif lies at 84–97 (CFRCQSDEHRTPQC). A disordered region spans residues 284–305 (QQIQHQQATGSPAPVPAPPRLY). A compositionally biased stretch (pro residues) spans 296–305 (APVPAPPRLY).

In terms of tissue distribution, expressed throughout the germline.

RNA-binding protein that is required for the germ line to transition from spermatogenesis to oogenesis and allow for normal oocyte development. The chain is RNA-binding protein rnp-1 from Caenorhabditis elegans.